Reading from the N-terminus, the 37-residue chain is Large ribosomal subunit protein bL36 (37 aa).

This sequence belongs to the bacterial ribosomal protein bL36 family.

This is Large ribosomal subunit protein bL36 from Alkalilimnicola ehrlichii (strain ATCC BAA-1101 / DSM 17681 / MLHE-1).